The sequence spans 212 residues: Guanylate kinase (212 aa).

The region spanning 7-187 (GLLIVLSGPS…AADRIIAIIR (181 aa)) is the Guanylate kinase-like domain. 14–21 (GPSGVGKA) contributes to the ATP binding site.

The protein belongs to the guanylate kinase family.

Its subcellular location is the cytoplasm. The catalysed reaction is GMP + ATP = GDP + ADP. In terms of biological role, essential for recycling GMP and indirectly, cGMP. This is Guanylate kinase from Onion yellows phytoplasma (strain OY-M).